Consider the following 131-residue polypeptide: ATP synthase epsilon chain (131 aa).

Belongs to the ATPase epsilon chain family. In terms of assembly, F-type ATPases have 2 components, CF(1) - the catalytic core - and CF(0) - the membrane proton channel. CF(1) has five subunits: alpha(3), beta(3), gamma(1), delta(1), epsilon(1). CF(0) has three main subunits: a, b and c.

It is found in the cell membrane. Functionally, produces ATP from ADP in the presence of a proton gradient across the membrane. This is ATP synthase epsilon chain from Clostridium novyi (strain NT).